The following is a 433-amino-acid chain: Divergent protein kinase domain 2B (433 aa).

A signal peptide spans methionine 1 to serine 29. A glycan (N-linked (GlcNAc...) asparagine) is linked at asparagine 100.

The protein belongs to the DIPK family.

Its subcellular location is the secreted. The chain is Divergent protein kinase domain 2B (DIPK2B) from Bos taurus (Bovine).